Consider the following 170-residue polypeptide: Ureidoglycolate lyase (170 aa).

Belongs to the ureidoglycolate lyase family. As to quaternary structure, homodimer. The cofactor is Ni(2+).

The enzyme catalyses (S)-ureidoglycolate = urea + glyoxylate. It participates in nitrogen metabolism; (S)-allantoin degradation. Catalyzes the catabolism of the allantoin degradation intermediate (S)-ureidoglycolate, generating urea and glyoxylate. Involved in the utilization of allantoin as nitrogen source. The sequence is that of Ureidoglycolate lyase from Pseudomonas syringae pv. syringae (strain B728a).